The chain runs to 498 residues: Flagellin (498 aa).

Belongs to the bacterial flagellin family.

It localises to the secreted. The protein localises to the bacterial flagellum. In terms of biological role, flagellin is the subunit protein which polymerizes to form the filaments of bacterial flagella. This Escherichia coli (strain K12) protein is Flagellin (fliC).